We begin with the raw amino-acid sequence, 606 residues long: Phosphoenolpyruvate carboxykinase [GTP] (606 aa).

Substrate-binding positions include arginine 79 and 218–220 (YGG). Lysine 227 and histidine 247 together coordinate Mn(2+). Residue serine 269 coordinates substrate. 270-275 (ACGKTN) is a binding site for GTP. Residue cysteine 271 is part of the active site. Aspartate 294 contributes to the Mn(2+) binding site. 384-386 (NSR) contacts substrate. Residues arginine 386, arginine 417, and 512–515 (FGEN) contribute to the GTP site.

Belongs to the phosphoenolpyruvate carboxykinase [GTP] family. In terms of assembly, monomer. Mn(2+) is required as a cofactor.

Its subcellular location is the cytoplasm. The enzyme catalyses oxaloacetate + GTP = phosphoenolpyruvate + GDP + CO2. Its pathway is carbohydrate biosynthesis; gluconeogenesis. In terms of biological role, catalyzes the conversion of oxaloacetate (OAA) to phosphoenolpyruvate (PEP), the rate-limiting step in the metabolic pathway that produces glucose from lactate and other precursors derived from the citric acid cycle. This chain is Phosphoenolpyruvate carboxykinase [GTP], found in Corynebacterium jeikeium (strain K411).